A 255-amino-acid polypeptide reads, in one-letter code: Zinc import ATP-binding protein ZnuC (255 aa).

The 216-residue stretch at 4–219 folds into the ABC transporter domain; the sequence is VDVDGLSLRY…PEYRALFGTG (216 aa). ATP is bound at residue 36–43; that stretch reads GPNGSGKT. The interval 234-255 is disordered; that stretch reads EHDHHDGCAHGQATEDRTEAAE.

It belongs to the ABC transporter superfamily. Zinc importer (TC 3.A.1.15.5) family. As to quaternary structure, the complex is composed of two ATP-binding proteins (ZnuC), two transmembrane proteins (ZnuB) and a solute-binding protein (ZnuA).

Its subcellular location is the cell inner membrane. It carries out the reaction Zn(2+)(out) + ATP(in) + H2O(in) = Zn(2+)(in) + ADP(in) + phosphate(in) + H(+)(in). Functionally, part of the ABC transporter complex ZnuABC involved in zinc import. Responsible for energy coupling to the transport system. In Roseobacter denitrificans (strain ATCC 33942 / OCh 114) (Erythrobacter sp. (strain OCh 114)), this protein is Zinc import ATP-binding protein ZnuC.